Here is a 499-residue protein sequence, read N- to C-terminus: Calcium/calmodulin-dependent protein kinase type II subunit delta (499 aa).

At Ala-2 the chain carries N-acetylalanine. The Protein kinase domain occupies 14-272; that stretch reads YQLFEELGKG…ASEALKHPWI (259 aa). Residues 20 to 28 and Lys-43 contribute to the ATP site; that span reads LGKGAFSVV. Asp-136 (proton acceptor) is an active-site residue. Residues 283-292 form an autoinhibitory domain region; the sequence is HRQETVDCLK. A Phosphothreonine; by autocatalysis modification is found at Thr-287. Positions 291–301 are calmodulin-binding; the sequence is LKKFNARRKLK. 2 positions are modified to phosphothreonine; by autocatalysis: Thr-306 and Thr-307. Position 315 is a phosphoserine (Ser-315). Position 318 is an N6-acetyllysine (Lys-318). Phosphoserine is present on residues Ser-319 and Ser-330. Phosphothreonine is present on Thr-331. Ser-333 bears the Phosphoserine mark. Thr-336 and Thr-337 each carry phosphothreonine. 3 positions are modified to phosphoserine: Ser-404, Ser-490, and Ser-494.

It belongs to the protein kinase superfamily. CAMK Ser/Thr protein kinase family. CaMK subfamily. As to quaternary structure, CAMK2 is composed of 4 different chains: alpha (CAMK2A), beta (CAMK2B), gamma (CAMK2G), and delta (CAMK2D). The different isoforms assemble into homo- or heteromultimeric holoenzymes composed of 12 subunits with two hexameric rings stacked one on top of the other. Interacts with RRAD CACNB2. In terms of processing, autophosphorylation of Thr-287 following activation by Ca(2+)/calmodulin. Phosphorylation of Thr-287 locks the kinase into an activated state.

It is found in the cell membrane. Its subcellular location is the sarcolemma. It localises to the sarcoplasmic reticulum membrane. The catalysed reaction is L-seryl-[protein] + ATP = O-phospho-L-seryl-[protein] + ADP + H(+). It carries out the reaction L-threonyl-[protein] + ATP = O-phospho-L-threonyl-[protein] + ADP + H(+). Activated by Ca(2+)/calmodulin. Binding of calmodulin results in conformational change that relieves intrasteric autoinhibition and allows autophosphorylation of Thr-287 which turns the kinase in a constitutively active form and confers to the kinase a Ca(2+)-independent activity. In terms of biological role, calcium/calmodulin-dependent protein kinase involved in the regulation of Ca(2+) homeostatis and excitation-contraction coupling (ECC) in heart by targeting ion channels, transporters and accessory proteins involved in Ca(2+) influx into the myocyte, Ca(2+) release from the sarcoplasmic reticulum (SR), SR Ca(2+) uptake and Na(+) and K(+) channel transport. Targets also transcription factors and signaling molecules to regulate heart function. In its activated form, is involved in the pathogenesis of dilated cardiomyopathy and heart failure. Contributes to cardiac decompensation and heart failure by regulating SR Ca(2+) release via direct phosphorylation of RYR2 Ca(2+) channel on 'Ser-2808'. In the nucleus, phosphorylates the MEF2 repressor HDAC4, promoting its nuclear export and binding to 14-3-3 protein, and expression of MEF2 and genes involved in the hypertrophic program. Is essential for left ventricular remodeling responses to myocardial infarction. In pathological myocardial remodeling acts downstream of the beta adrenergic receptor signaling cascade to regulate key proteins involved in ECC. Regulates Ca(2+) influx to myocytes by binding and phosphorylating the L-type Ca(2+) channel subunit beta-2 CACNB2. In addition to Ca(2+) channels, can target and regulate the cardiac sarcolemmal Na(+) channel Nav1.5/SCN5A and the K+ channel Kv4.3/KCND3, which contribute to arrhythmogenesis in heart failure. Phosphorylates phospholamban (PLN/PLB), an endogenous inhibitor of SERCA2A/ATP2A2, contributing to the enhancement of SR Ca(2+) uptake that may be important in frequency-dependent acceleration of relaxation (FDAR) and maintenance of contractile function during acidosis. May participate in the modulation of skeletal muscle function in response to exercise, by regulating SR Ca(2+) transport through phosphorylation of PLN/PLB and triadin, a ryanodine receptor-coupling factor. In response to interferon-gamma (IFN-gamma) stimulation, catalyzes phosphorylation of STAT1, stimulating the JAK-STAT signaling pathway. This chain is Calcium/calmodulin-dependent protein kinase type II subunit delta (CAMK2D), found in Sus scrofa (Pig).